The following is a 125-amino-acid chain: U11-myrmicitoxin-Ta1a (125 aa).

The signal sequence occupies residues 1–21 (MKTVIFILGFAFVAILIPTNG). A propeptide spanning residues 22–91 (ESMADADAMA…RAMAAAYAAA (70 aa)) is cleaved from the precursor. A disulfide bridge connects residues C101 and C124.

This sequence belongs to the formicidae venom precursor-01 superfamily. Expressed by the venom gland.

The protein resides in the secreted. It localises to the target cell membrane. Functionally, neurotoxin that causes irreversible rapid flaccid paralysis in blowflies and honeybees upon intrathoracic injection. Causes a quick and irreversible cytolytic effect (at 10 uM) indicating it possibly acts as a pore-forming peptide. Shows only weak effect on aphids (A.pisum) at high doses 24 hours post intrathoracic injection. In vitro, is not cytotoxic on the dipteran S2 Drosophila embryonic cell line. This Tetramorium africanum (Fierce ant) protein is U11-myrmicitoxin-Ta1a.